The primary structure comprises 272 residues: Elongation factor Ts (272 aa).

Positions 86–89 are involved in Mg(2+) ion dislocation from EF-Tu; it reads TDFV.

This sequence belongs to the EF-Ts family.

It is found in the cytoplasm. Associates with the EF-Tu.GDP complex and induces the exchange of GDP to GTP. It remains bound to the aminoacyl-tRNA.EF-Tu.GTP complex up to the GTP hydrolysis stage on the ribosome. This chain is Elongation factor Ts, found in Blochmanniella pennsylvanica (strain BPEN).